The sequence spans 113 residues: Antimicrobial peptide microplusin (113 aa).

An N-terminal signal peptide occupies residues 1–19 (MKSLLVLALLAFGAVLVSA). Disulfide bonds link Cys-25–Cys-71, Cys-38–Cys-99, and Cys-60–Cys-65.

The protein resides in the secreted. Its function is as follows. Has bacteriostatic activity against Gram-positive bacteria, but not against Gram-negative bacteria. Has fungistatic activity against some but not all fungi. Binds and sequesters copper and iron ions. Copper-chelating activity is crucial for antimicrobial activity against M.luteus. This is Antimicrobial peptide microplusin from Argas monolakensis (Mono lake bird tick).